Consider the following 443-residue polypeptide: Ribosomal protein uS12 methylthiotransferase RimO (443 aa).

The region spanning 6 to 116 (PRVGMISLGC…VVNAVHDVVP (111 aa)) is the MTTase N-terminal domain. Positions 15, 51, 80, 149, 153, and 156 each coordinate [4Fe-4S] cluster. Residues 135–373 (LTPRHYAYLK…MAHQQAISAA (239 aa)) form the Radical SAM core domain. The region spanning 376–443 (QMKIGKEIEV…DEYDLWAEML (68 aa)) is the TRAM domain.

It belongs to the methylthiotransferase family. RimO subfamily. The cofactor is [4Fe-4S] cluster.

The protein resides in the cytoplasm. The catalysed reaction is L-aspartate(89)-[ribosomal protein uS12]-hydrogen + (sulfur carrier)-SH + AH2 + 2 S-adenosyl-L-methionine = 3-methylsulfanyl-L-aspartate(89)-[ribosomal protein uS12]-hydrogen + (sulfur carrier)-H + 5'-deoxyadenosine + L-methionine + A + S-adenosyl-L-homocysteine + 2 H(+). Its function is as follows. Catalyzes the methylthiolation of an aspartic acid residue of ribosomal protein uS12. This Pseudomonas syringae pv. tomato (strain ATCC BAA-871 / DC3000) protein is Ribosomal protein uS12 methylthiotransferase RimO.